We begin with the raw amino-acid sequence, 236 residues long: Small ribosomal subunit protein uS2c (236 aa).

This sequence belongs to the universal ribosomal protein uS2 family.

It is found in the plastid. Its subcellular location is the chloroplast. The protein is Small ribosomal subunit protein uS2c (rps2) of Agrostis stolonifera (Creeping bentgrass).